The primary structure comprises 197 residues: Imidazoleglycerol-phosphate dehydratase (197 aa).

This sequence belongs to the imidazoleglycerol-phosphate dehydratase family.

The protein resides in the cytoplasm. The catalysed reaction is D-erythro-1-(imidazol-4-yl)glycerol 3-phosphate = 3-(imidazol-4-yl)-2-oxopropyl phosphate + H2O. It participates in amino-acid biosynthesis; L-histidine biosynthesis; L-histidine from 5-phospho-alpha-D-ribose 1-diphosphate: step 6/9. The sequence is that of Imidazoleglycerol-phosphate dehydratase from Syntrophomonas wolfei subsp. wolfei (strain DSM 2245B / Goettingen).